The sequence spans 204 residues: Minor allergen Cla h 7 (204 aa).

Residues 5–195 (IAIIFYSTWG…ELTAQGKAFY (191 aa)) form the Flavodoxin-like domain.

It belongs to the WrbA family.

Its subcellular location is the cytoplasm. This chain is Minor allergen Cla h 7 (CLAH7), found in Davidiella tassiana (Mycosphaerella tassiana).